Reading from the N-terminus, the 227-residue chain is Prolactin (227 aa).

Residues 1 to 28 (MDSKWSRRTGSLLLLLVSNLLLCKSTAS) form the signal peptide. Cys32 and Cys39 are oxidised to a cystine. Ser54, Ser62, and Ser118 each carry phosphoserine. Cystine bridges form between Cys86–Cys202 and Cys219–Cys227.

It belongs to the somatotropin/prolactin family. In terms of assembly, interacts with PRLR.

It localises to the secreted. Its function is as follows. Prolactin acts primarily on the mammary gland by promoting lactation. This is Prolactin (PRL) from Oryctolagus cuniculus (Rabbit).